We begin with the raw amino-acid sequence, 130 residues long: Small ribosomal subunit protein uS9 (130 aa).

It belongs to the universal ribosomal protein uS9 family.

This Streptococcus uberis (strain ATCC BAA-854 / 0140J) protein is Small ribosomal subunit protein uS9.